A 1209-amino-acid chain; its full sequence is Zinc finger protein 804A (1209 aa).

The C2H2-type zinc finger occupies 57–81 (FYCELCDKQYYKHQEFDNHINSYDH). Over residues 380–394 (VKHNEASTTEVENKN) the composition is skewed to basic and acidic residues. Disordered regions lie at residues 380–401 (VKHN…TLAP) and 792–860 (PEEF…MKPQ). The segment covering 807-819 (KPKKKRRRKRGRF) has biased composition (basic residues). 2 stretches are compositionally biased toward basic and acidic residues: residues 826–836 (LELKENTDYPV) and 848–860 (LISE…MKPQ).

In Homo sapiens (Human), this protein is Zinc finger protein 804A (ZNF804A).